The primary structure comprises 163 residues: Nucleotide-binding protein NFA_51200 (163 aa).

It belongs to the YajQ family.

Its function is as follows. Nucleotide-binding protein. This chain is Nucleotide-binding protein NFA_51200, found in Nocardia farcinica (strain IFM 10152).